Here is a 281-residue protein sequence, read N- to C-terminus: 4-deoxy-L-threo-5-hexosulose-uronate ketol-isomerase (281 aa).

The Zn(2+) site is built by H198, H200, E205, and H248.

It belongs to the KduI family. Zn(2+) serves as cofactor.

The catalysed reaction is 5-dehydro-4-deoxy-D-glucuronate = 3-deoxy-D-glycero-2,5-hexodiulosonate. It functions in the pathway glycan metabolism; pectin degradation; 2-dehydro-3-deoxy-D-gluconate from pectin: step 4/5. Functionally, catalyzes the isomerization of 5-dehydro-4-deoxy-D-glucuronate to 3-deoxy-D-glycero-2,5-hexodiulosonate. The sequence is that of 4-deoxy-L-threo-5-hexosulose-uronate ketol-isomerase from Lacticaseibacillus casei (strain BL23) (Lactobacillus casei).